The sequence spans 111 residues: Large ribosomal subunit protein P2-2 (111 aa).

Residues 86–111 (APAAAAAKKDEPEEEADDDMGFGLFD) form a disordered region.

This sequence belongs to the eukaryotic ribosomal protein P1/P2 family. As to quaternary structure, P1 and P2 exist as dimers at the large ribosomal subunit. Phosphorylated.

Plays an important role in the elongation step of protein synthesis. In Leishmania infantum, this protein is Large ribosomal subunit protein P2-2 (LIP').